The sequence spans 209 residues: Small ribosomal subunit protein uS4 (209 aa).

A disordered region spans residues 23 to 46 (SRNPLLKKPHPPGQHGMQRKKKSD). In terms of domain architecture, S4 RNA-binding spans 93–153 (CRLDNMVYRM…EKSKRLQSVK (61 aa)).

The protein belongs to the universal ribosomal protein uS4 family. In terms of assembly, part of the 30S ribosomal subunit. Contacts protein S5. The interaction surface between S4 and S5 is involved in control of translational fidelity.

In terms of biological role, one of the primary rRNA binding proteins, it binds directly to 16S rRNA where it nucleates assembly of the body of the 30S subunit. Functionally, with S5 and S12 plays an important role in translational accuracy. The chain is Small ribosomal subunit protein uS4 from Chlamydia pneumoniae (Chlamydophila pneumoniae).